Reading from the N-terminus, the 583-residue chain is Isocitrate dehydrogenase kinase/phosphatase (583 aa).

ATP-binding positions include 315–321 and K336; that span reads APGIRGM. Residue D371 is part of the active site.

Belongs to the AceK family.

The protein localises to the cytoplasm. It catalyses the reaction L-seryl-[isocitrate dehydrogenase] + ATP = O-phospho-L-seryl-[isocitrate dehydrogenase] + ADP + H(+). In terms of biological role, bifunctional enzyme which can phosphorylate or dephosphorylate isocitrate dehydrogenase (IDH) on a specific serine residue. This is a regulatory mechanism which enables bacteria to bypass the Krebs cycle via the glyoxylate shunt in response to the source of carbon. When bacteria are grown on glucose, IDH is fully active and unphosphorylated, but when grown on acetate or ethanol, the activity of IDH declines drastically concomitant with its phosphorylation. In Salmonella agona (strain SL483), this protein is Isocitrate dehydrogenase kinase/phosphatase.